The chain runs to 277 residues: Caspase-3 (277 aa).

At methionine 1 the chain carries N-acetylmethionine. 2 consecutive propeptides follow at residues 1-9 and 10-28; these read MDNNETSVD and SKSI…KSMD. Lysine 11 carries the N6-acetyllysine modification. Serine 26 carries the post-translational modification Phosphoserine. Active-site residues include histidine 121 and cysteine 163. S-nitrosocysteine; in inhibited form is present on cysteine 163.

Belongs to the peptidase C14A family. Heterotetramer that consists of two anti-parallel arranged heterodimers, each one formed by a 17 kDa (p17) and a 12 kDa (p12) subunit. Interacts with BIRC6/bruce. In terms of processing, cleavage by granzyme B, caspase-6, caspase-8 and caspase-10 generates the two active subunits. Additional processing of the propeptides is likely due to the autocatalytic activity of the activated protease. Active heterodimers between the small subunit of caspase-7 protease and the large subunit of caspase-3 also occur and vice versa. Post-translationally, S-nitrosylated on its catalytic site cysteine in unstimulated cell lines and denitrosylated upon activation of the Fas apoptotic pathway, associated with an increase in intracellular caspase activity. Fas therefore activates caspase-3 not only by inducing the cleavage of the caspase zymogen to its active subunits, but also by stimulating the denitrosylation of its active site thiol. Ubiquitinated by BIRC6; this activity is inhibited by DIABLO/SMAC. Expressed in heart, brain, liver, and muscle but not in kidney or testis.

Its subcellular location is the cytoplasm. It carries out the reaction Strict requirement for an Asp residue at positions P1 and P4. It has a preferred cleavage sequence of Asp-Xaa-Xaa-Asp-|- with a hydrophobic amino-acid residue at P2 and a hydrophilic amino-acid residue at P3, although Val or Ala are also accepted at this position.. With respect to regulation, inhibited by BIRC6; following inhibition of BIRC6-caspase binding by DIABLO/SMAC, BIRC6 is subjected to caspase cleavage, leading to an increase in active caspases. Its function is as follows. Involved in the activation cascade of caspases responsible for apoptosis execution. At the onset of apoptosis, it proteolytically cleaves poly(ADP-ribose) polymerase PARP1 at a '216-Asp-|-Gly-217' bond. Cleaves and activates sterol regulatory element binding proteins (SREBPs) between the basic helix-loop-helix leucine zipper domain and the membrane attachment domain. Cleaves and activates caspase-6, -7 and -9 (CASP6, CASP7 and CASP9, respectively). Cleaves and inactivates interleukin-18 (IL18). Triggers cell adhesion in sympathetic neurons through RET cleavage. Cleaves IL-1 beta between an Asp and an Ala, releasing the mature cytokine which is involved in a variety of inflammatory processes. Cleaves and inhibits serine/threonine-protein kinase AKT1 in response to oxidative stress. Acts as an inhibitor of type I interferon production during virus-induced apoptosis by mediating cleavage of antiviral proteins CGAS, IRF3 and MAVS, thereby preventing cytokine overproduction. Also involved in pyroptosis by mediating cleavage and activation of gasdermin-E (GSDME). Cleaves XRCC4 and phospholipid scramblase proteins XKR4, XKR8 and XKR9, leading to promote phosphatidylserine exposure on apoptotic cell surface. Cleaves BIRC6 following inhibition of BIRC6-caspase binding by DIABLO/SMAC. This chain is Caspase-3 (Casp3), found in Rattus norvegicus (Rat).